The sequence spans 257 residues: MTSQINNEFLSLDVLPKHIAVIMDGNGRWAKAQGKPRVFGHKAGVDAVRKTISAASKLGINAITLFAFSSENWRRPEEEVSVLMELFITVLSREVKRLHKNNIQLRIIGETSQFSSRLQKKIVEAETLTSENTGLVLNVAANYGGKWDITQAVRRLAYQVERGNLQADDIDEDLIASKLTMSDLPEVDLMIRTSGECRISNFMLWQMAYAEFYFTDQYWPDFNEQSLADAVAWFVSRERRFGCTGEQIQALMNEKDQ.

Residue Asp24 is part of the active site. Mg(2+) is bound at residue Asp24. Substrate is bound by residues 25–28 (GNGR), Trp29, Arg37, His41, and 69–71 (SSE). Residue Asn72 is the Proton acceptor of the active site. Substrate is bound by residues Trp73, Arg75, Arg192, and 198–200 (RIS). Glu211 is a Mg(2+) binding site.

The protein belongs to the UPP synthase family. Homodimer. Mg(2+) is required as a cofactor.

The catalysed reaction is 8 isopentenyl diphosphate + (2E,6E)-farnesyl diphosphate = di-trans,octa-cis-undecaprenyl diphosphate + 8 diphosphate. Catalyzes the sequential condensation of isopentenyl diphosphate (IPP) with (2E,6E)-farnesyl diphosphate (E,E-FPP) to yield (2Z,6Z,10Z,14Z,18Z,22Z,26Z,30Z,34E,38E)-undecaprenyl diphosphate (di-trans,octa-cis-UPP). UPP is the precursor of glycosyl carrier lipid in the biosynthesis of bacterial cell wall polysaccharide components such as peptidoglycan and lipopolysaccharide. This Aliivibrio fischeri (strain ATCC 700601 / ES114) (Vibrio fischeri) protein is Ditrans,polycis-undecaprenyl-diphosphate synthase ((2E,6E)-farnesyl-diphosphate specific).